The following is a 107-amino-acid chain: Ribonuclease P protein subunit rpr2 (107 aa).

4 residues coordinate Zn(2+): cysteine 59, cysteine 62, cysteine 93, and cysteine 96.

The protein belongs to the eukaryotic/archaeal RNase P protein component 4 family. The cofactor is Zn(2+).

Its subcellular location is the cytoplasm. It is found in the nucleus. The catalysed reaction is Endonucleolytic cleavage of RNA, removing 5'-extranucleotides from tRNA precursor.. Functionally, component of ribonuclease P, a protein complex that generates mature tRNA molecules by cleaving their 5'-ends. The sequence is that of Ribonuclease P protein subunit rpr2 (rpr2) from Schizosaccharomyces pombe (strain 972 / ATCC 24843) (Fission yeast).